Here is a 344-residue protein sequence, read N- to C-terminus: 2,3,4,5-tetrahydropyridine-2,6-dicarboxylate N-succinyltransferase (344 aa).

Position 205 (Glu205) interacts with Mg(2+). Glu221 acts as the Acyl-anhydride intermediate in catalysis. Residues Arg223, Gly238, Ser241, Ala264, 279–280, Gly287, Lys304, and 317–320 each bind succinyl-CoA; these read EA and RRNS.

Belongs to the type 2 tetrahydrodipicolinate N-succinyltransferase family. Homotrimer.

It localises to the cytoplasm. It catalyses the reaction (S)-2,3,4,5-tetrahydrodipicolinate + succinyl-CoA + H2O = (S)-2-succinylamino-6-oxoheptanedioate + CoA. It functions in the pathway amino-acid biosynthesis; L-lysine biosynthesis via DAP pathway; LL-2,6-diaminopimelate from (S)-tetrahydrodipicolinate (succinylase route): step 1/3. Functionally, catalyzes the conversion of the cyclic tetrahydrodipicolinate (THDP) into the acyclic N-succinyl-L-2-amino-6-oxopimelate using succinyl-CoA. The polypeptide is 2,3,4,5-tetrahydropyridine-2,6-dicarboxylate N-succinyltransferase (Pseudomonas putida (strain ATCC 47054 / DSM 6125 / CFBP 8728 / NCIMB 11950 / KT2440)).